Consider the following 429-residue polypeptide: Antho-RFamide neuropeptides type 2 (429 aa).

Residues 1–22 (MTTVSYVTILLTVLVQVLTSDA) form the signal peptide. A propeptide spanning residues 23-233 (KATNNKRELS…EFQGRFGRED (211 aa)) is cleaved from the precursor. Basic and acidic residues predominate over residues 230–371 (GREDQGRFGR…EDIAKEDQGR (142 aa)). The interval 230-429 (GREDQGRFGR…KSDDALAKIS (200 aa)) is disordered. At Gln234 the chain carries Pyrrolidone carboxylic acid. Phe237 bears the Phenylalanine amide mark. The propeptide occupies 239–241 (RED). The residue at position 242 (Gln242) is a Pyrrolidone carboxylic acid. Residue Phe245 is modified to Phenylalanine amide. Positions 247-249 (RED) are excised as a propeptide. At Gln250 the chain carries Pyrrolidone carboxylic acid. Residue Phe253 is modified to Phenylalanine amide. Residues 255–257 (RED) constitute a propeptide that is removed on maturation. At Gln258 the chain carries Pyrrolidone carboxylic acid. Phe261 is subject to Phenylalanine amide. Positions 263–265 (RED) are excised as a propeptide. At Gln266 the chain carries Pyrrolidone carboxylic acid. Phe269 carries the post-translational modification Phenylalanine amide. Residues 271–273 (RED) constitute a propeptide that is removed on maturation. Pyrrolidone carboxylic acid is present on Gln274. At Phe277 the chain carries Phenylalanine amide. The propeptide occupies 279-289 (RELQGRFGRED). The residue at position 290 (Gln290) is a Pyrrolidone carboxylic acid. Phe293 is modified (phenylalanine amide). Positions 295–297 (RED) are excised as a propeptide. At Gln298 the chain carries Pyrrolidone carboxylic acid. Position 301 is a phenylalanine amide (Phe301). Residues 303 to 305 (RED) constitute a propeptide that is removed on maturation. Gln306 is modified (pyrrolidone carboxylic acid). Position 309 is a phenylalanine amide (Phe309). A propeptide spanning residues 311-321 (RELQGRFGRED) is cleaved from the precursor. The residue at position 322 (Gln322) is a Pyrrolidone carboxylic acid. Phenylalanine amide is present on Phe325. Residues 327–329 (RED) constitute a propeptide that is removed on maturation. The residue at position 330 (Gln330) is a Pyrrolidone carboxylic acid. Phe333 is subject to Phenylalanine amide. The propeptide occupies 335–342 (REDLAKED). A Pyrrolidone carboxylic acid modification is found at Gln343. At Phe346 the chain carries Phenylalanine amide. Residues 348-355 (REDLAKED) constitute a propeptide that is removed on maturation. The residue at position 356 (Gln356) is a Pyrrolidone carboxylic acid. Phenylalanine amide is present on Phe359. Positions 361 to 368 (REDIAKED) are excised as a propeptide. At Gln369 the chain carries Pyrrolidone carboxylic acid. Residue Phe372 is modified to Phenylalanine amide. Residues 374–429 (RNAAAAAKKRTIDVIDIESDPKPQTRFRDGKDMQEKRKVEKKDKIEKSDDALAKIS) constitute a propeptide that is removed on maturation. Residues 392-429 (SDPKPQTRFRDGKDMQEKRKVEKKDKIEKSDDALAKIS) are compositionally biased toward basic and acidic residues.

This sequence belongs to the FARP (FMRFamide related peptide) family.

It localises to the secreted. Its function is as follows. Not known but it could act as a transmitter at neuromuscular synapses. The protein is Antho-RFamide neuropeptides type 2 of Anthopleura elegantissima (Green aggregating anemone).